The primary structure comprises 236 residues: Leucyl/phenylalanyl-tRNA--protein transferase (236 aa).

Belongs to the L/F-transferase family.

Its subcellular location is the cytoplasm. The catalysed reaction is N-terminal L-lysyl-[protein] + L-leucyl-tRNA(Leu) = N-terminal L-leucyl-L-lysyl-[protein] + tRNA(Leu) + H(+). The enzyme catalyses N-terminal L-arginyl-[protein] + L-leucyl-tRNA(Leu) = N-terminal L-leucyl-L-arginyl-[protein] + tRNA(Leu) + H(+). It catalyses the reaction L-phenylalanyl-tRNA(Phe) + an N-terminal L-alpha-aminoacyl-[protein] = an N-terminal L-phenylalanyl-L-alpha-aminoacyl-[protein] + tRNA(Phe). Functions in the N-end rule pathway of protein degradation where it conjugates Leu, Phe and, less efficiently, Met from aminoacyl-tRNAs to the N-termini of proteins containing an N-terminal arginine or lysine. The protein is Leucyl/phenylalanyl-tRNA--protein transferase of Shewanella putrefaciens (strain CN-32 / ATCC BAA-453).